A 377-amino-acid polypeptide reads, in one-letter code: Putative zinc metalloprotease Atu1380 (377 aa).

H29 lines the Zn(2+) pocket. E30 is an active-site residue. Position 33 (H33) interacts with Zn(2+). The next 3 helical transmembrane spans lie at 118-140 (VAAG…FGIY), 299-321 (LGIS…LNLM), and 351-373 (VAFR…NDIS). One can recognise a PDZ domain in the interval 129–202 (AILIFAVLFG…TPITVTVERA (74 aa)).

The protein belongs to the peptidase M50B family. Zn(2+) serves as cofactor.

The protein resides in the cell inner membrane. The chain is Putative zinc metalloprotease Atu1380 from Agrobacterium fabrum (strain C58 / ATCC 33970) (Agrobacterium tumefaciens (strain C58)).